Here is a 378-residue protein sequence, read N- to C-terminus: Cytochrome b (378 aa).

The next 4 membrane-spanning stretches (helical) occupy residues 34–54 (FGSL…FLAM), 78–99 (WLLR…YLHV), 114–134 (WLIG…GYVL), and 179–199 (FFTF…IHLL). The heme b site is built by H84 and H98. Heme b-binding residues include H183 and H197. H202 is a binding site for a ubiquinone. The next 4 helical transmembrane spans lie at 227 to 247 (FKDI…VLIS), 289 to 309 (LGGV…PFYN), 321 to 341 (INQV…WIGA), and 348 to 368 (YVLI…VNPL).

The protein belongs to the cytochrome b family. As to quaternary structure, the main subunits of complex b-c1 are: cytochrome b, cytochrome c1 and the Rieske protein. Heme b serves as cofactor.

The protein localises to the mitochondrion inner membrane. Functionally, component of the ubiquinol-cytochrome c reductase complex (complex III or cytochrome b-c1 complex) that is part of the mitochondrial respiratory chain. The b-c1 complex mediates electron transfer from ubiquinol to cytochrome c. Contributes to the generation of a proton gradient across the mitochondrial membrane that is then used for ATP synthesis. The protein is Cytochrome b (mt:Cyt-b) of Drosophila simulans (Fruit fly).